The sequence spans 511 residues: GMP synthase [glutamine-hydrolyzing] (511 aa).

The Glutamine amidotransferase type-1 domain occupies L6 to D196. The Nucleophile role is filled by C83. Catalysis depends on residues H170 and E172. A GMPS ATP-PPase domain is found at W197–R386. S224–S230 serves as a coordination point for ATP.

In terms of assembly, homodimer.

The catalysed reaction is XMP + L-glutamine + ATP + H2O = GMP + L-glutamate + AMP + diphosphate + 2 H(+). Its pathway is purine metabolism; GMP biosynthesis; GMP from XMP (L-Gln route): step 1/1. Functionally, catalyzes the synthesis of GMP from XMP. This chain is GMP synthase [glutamine-hydrolyzing], found in Oceanobacillus iheyensis (strain DSM 14371 / CIP 107618 / JCM 11309 / KCTC 3954 / HTE831).